Here is a 68-residue protein sequence, read N- to C-terminus: Alpha-conotoxin-like Lt1.2 (68 aa).

The first 21 residues, methionine 1–threonine 21, serve as a signal peptide directing secretion. Residues phenylalanine 22–arginine 48 constitute a propeptide that is removed on maturation. Disulfide bonds link cysteine 50–cysteine 56 and cysteine 51–cysteine 64. Residues alanine 52–alanine 54 are lacks the Ser-Xaa-Pro motif that is crucial for potent interaction with nAChR. Glycine amide is present on glycine 65.

This sequence belongs to the conotoxin A superfamily. As to expression, expressed by the venom duct.

It localises to the secreted. Functionally, alpha-conotoxins act on postsynaptic membranes, they bind to the nicotinic acetylcholine receptors (nAChR) and thus inhibit them. Has a distinct nAChR binding mode from other alpha-conotoxins, due to a different three residue motif (Ala-Xaa-Ala instead of the conserved Ser-Xaa-Pro motif). This is Alpha-conotoxin-like Lt1.2 from Conus litteratus (Lettered cone).